A 428-amino-acid chain; its full sequence is G2/mitotic-specific cyclin-1 (428 aa).

The segment at 1-22 (MKFSEEKNVSNNPTNFEGGLDS) is disordered.

This sequence belongs to the cyclin family. Cyclin AB subfamily. Interacts with the CDC2 protein kinase to form a serine/threonine kinase holoenzyme complex also known as maturation promoting factor (MPF). The cyclin subunit imparts substrate specificity to the complex.

Essential for the control of the cell cycle at the G2/M (mitosis) transition. This is G2/mitotic-specific cyclin-1 from Medicago sativa subsp. varia (Alfalfa).